Reading from the N-terminus, the 323-residue chain is Ribosomal protein L11 methyltransferase (323 aa).

Threonine 160, glycine 184, aspartate 206, and asparagine 257 together coordinate S-adenosyl-L-methionine.

Belongs to the methyltransferase superfamily. PrmA family.

The protein localises to the cytoplasm. The catalysed reaction is L-lysyl-[protein] + 3 S-adenosyl-L-methionine = N(6),N(6),N(6)-trimethyl-L-lysyl-[protein] + 3 S-adenosyl-L-homocysteine + 3 H(+). Methylates ribosomal protein L11. The protein is Ribosomal protein L11 methyltransferase of Agathobacter rectalis (strain ATCC 33656 / DSM 3377 / JCM 17463 / KCTC 5835 / VPI 0990) (Eubacterium rectale).